We begin with the raw amino-acid sequence, 248 residues long: Triosephosphate isomerase (248 aa).

9-11 contacts substrate; that stretch reads NWK. The active-site Electrophile is the His94. Glu166 (proton acceptor) is an active-site residue. Residues Gly172, Ser212, and 233-234 each bind substrate; that span reads GG.

This sequence belongs to the triosephosphate isomerase family. As to quaternary structure, homodimer.

The protein localises to the cytoplasm. The catalysed reaction is D-glyceraldehyde 3-phosphate = dihydroxyacetone phosphate. It participates in carbohydrate biosynthesis; gluconeogenesis. The protein operates within carbohydrate degradation; glycolysis; D-glyceraldehyde 3-phosphate from glycerone phosphate: step 1/1. Its function is as follows. Involved in the gluconeogenesis. Catalyzes stereospecifically the conversion of dihydroxyacetone phosphate (DHAP) to D-glyceraldehyde-3-phosphate (G3P). This Clostridium perfringens (strain ATCC 13124 / DSM 756 / JCM 1290 / NCIMB 6125 / NCTC 8237 / Type A) protein is Triosephosphate isomerase.